The chain runs to 380 residues: MPSSWGKIFKVGTFGESHGKSVGVIVEGVPAGIPIRLEEIQKDLDRRRPGQSNLTTPRDENDTVRVVSGVFEGKTIGSPIALVVENQNTNSKDYENLRTTYRPSHADYTYQMKYGFRAHVGGGRSSVRETIGRVAAAAIARMILKDDLGIETVAWVDSIGTIQSTIGEKYPKSREEVDQNEVRCPDAVSADQMRSLILKMKEAGDSVGGTIKCVSYNLPPGLGDPVYDKLDGDLAKAILSIPACKGFEVGSGFSGTLLTGSSHNDEFYVEGGTGKVRTKTNNSGGLQGGISNGEELVIRAAFKPTSTIFKKQNTINLKGEETTLEAKGRHDPCVLPRAVPIIEAVVNLVLVDAYLYQRAINPQWFQKWARIPDYYKDLEL.

R47 contributes to the NADP(+) binding site. Residues 124-126 (RSS), G288, 303-307 (KPTST), and R329 contribute to the FMN site.

It belongs to the chorismate synthase family. Homotetramer. FMNH2 serves as cofactor.

It catalyses the reaction 5-O-(1-carboxyvinyl)-3-phosphoshikimate = chorismate + phosphate. It participates in metabolic intermediate biosynthesis; chorismate biosynthesis; chorismate from D-erythrose 4-phosphate and phosphoenolpyruvate: step 7/7. Functionally, catalyzes the anti-1,4-elimination of the C-3 phosphate and the C-6 proR hydrogen from 5-enolpyruvylshikimate-3-phosphate (EPSP) to yield chorismate, which is the branch point compound that serves as the starting substrate for the three terminal pathways of aromatic amino acid biosynthesis. This reaction introduces a second double bond into the aromatic ring system. The chain is Chorismate synthase from Leptospira borgpetersenii serovar Hardjo-bovis (strain JB197).